A 227-amino-acid chain; its full sequence is Cytochrome c oxidase subunit 2 (227 aa).

Over 1 to 14 the chain is Mitochondrial intermembrane; sequence MAYPMQLGFQDATS. Residues 15–45 form a helical membrane-spanning segment; sequence PIMEELLHFHDHTLMIVFLISSLVLYIISLM. The Mitochondrial matrix segment spans residues 46–59; sequence LTTKLTHTSTMDAQ. The helical transmembrane segment at 60–87 threads the bilayer; the sequence is EVETIWTILPAIILILIALPSLRILYMM. The Mitochondrial intermembrane segment spans residues 88 to 227; sequence DEINNPSLTV…YFEKWSASML (140 aa). Residues H161, C196, E198, C200, H204, and M207 each contribute to the Cu cation site. Residue E198 participates in Mg(2+) binding. A Phosphotyrosine modification is found at Y218.

This sequence belongs to the cytochrome c oxidase subunit 2 family. As to quaternary structure, component of the cytochrome c oxidase (complex IV, CIV), a multisubunit enzyme composed of 14 subunits. The complex is composed of a catalytic core of 3 subunits MT-CO1, MT-CO2 and MT-CO3, encoded in the mitochondrial DNA, and 11 supernumerary subunits COX4I, COX5A, COX5B, COX6A, COX6B, COX6C, COX7A, COX7B, COX7C, COX8 and NDUFA4, which are encoded in the nuclear genome. The complex exists as a monomer or a dimer and forms supercomplexes (SCs) in the inner mitochondrial membrane with NADH-ubiquinone oxidoreductase (complex I, CI) and ubiquinol-cytochrome c oxidoreductase (cytochrome b-c1 complex, complex III, CIII), resulting in different assemblies (supercomplex SCI(1)III(2)IV(1) and megacomplex MCI(2)III(2)IV(2)). Found in a complex with TMEM177, COA6, COX18, COX20, SCO1 and SCO2. Interacts with TMEM177 in a COX20-dependent manner. Interacts with COX20. Interacts with COX16. The cofactor is Cu cation.

The protein resides in the mitochondrion inner membrane. The enzyme catalyses 4 Fe(II)-[cytochrome c] + O2 + 8 H(+)(in) = 4 Fe(III)-[cytochrome c] + 2 H2O + 4 H(+)(out). Component of the cytochrome c oxidase, the last enzyme in the mitochondrial electron transport chain which drives oxidative phosphorylation. The respiratory chain contains 3 multisubunit complexes succinate dehydrogenase (complex II, CII), ubiquinol-cytochrome c oxidoreductase (cytochrome b-c1 complex, complex III, CIII) and cytochrome c oxidase (complex IV, CIV), that cooperate to transfer electrons derived from NADH and succinate to molecular oxygen, creating an electrochemical gradient over the inner membrane that drives transmembrane transport and the ATP synthase. Cytochrome c oxidase is the component of the respiratory chain that catalyzes the reduction of oxygen to water. Electrons originating from reduced cytochrome c in the intermembrane space (IMS) are transferred via the dinuclear copper A center (CU(A)) of subunit 2 and heme A of subunit 1 to the active site in subunit 1, a binuclear center (BNC) formed by heme A3 and copper B (CU(B)). The BNC reduces molecular oxygen to 2 water molecules using 4 electrons from cytochrome c in the IMS and 4 protons from the mitochondrial matrix. The chain is Cytochrome c oxidase subunit 2 (MT-CO2) from Syncerus caffer (African buffalo).